The primary structure comprises 260 residues: Indole-3-glycerol phosphate synthase (260 aa).

Belongs to the TrpC family.

It catalyses the reaction 1-(2-carboxyphenylamino)-1-deoxy-D-ribulose 5-phosphate + H(+) = (1S,2R)-1-C-(indol-3-yl)glycerol 3-phosphate + CO2 + H2O. It functions in the pathway amino-acid biosynthesis; L-tryptophan biosynthesis; L-tryptophan from chorismate: step 4/5. This is Indole-3-glycerol phosphate synthase from Staphylococcus saprophyticus subsp. saprophyticus (strain ATCC 15305 / DSM 20229 / NCIMB 8711 / NCTC 7292 / S-41).